The chain runs to 74 residues: MEKLTILLLVAAVLMSTQALMQEQRQKAKINLFSKRRLSAESWWEENGCSLWGPCTVNAECCSGDCDETCIFGS.

An N-terminal signal peptide occupies residues methionine 1 to alanine 19. The propeptide occupies leucine 20 to serine 34. Intrachain disulfides connect cysteine 49-cysteine 62, cysteine 55-cysteine 66, and cysteine 61-cysteine 70.

This sequence belongs to the conotoxin O2 superfamily. As to expression, expressed by the venom duct.

Its subcellular location is the secreted. In terms of biological role, inhibits voltage-gated ion channels. The polypeptide is Conotoxin Vc6.8 (Conus victoriae (Queen Victoria cone)).